We begin with the raw amino-acid sequence, 449 residues long: Chromosomal replication initiator protein DnaA (449 aa).

The tract at residues 1–73 (MTQNPQWLWQ…TETIAELLQQ (73 aa)) is domain I, interacts with DnaA modulators. Residues 73–109 (QPVKVRLTSPEGNTLAATQSFYSSRSGQSTRPGKKTP) are domain II. Over residues 90–103 (TQSFYSSRSGQSTR) the composition is skewed to polar residues. The segment at 90–110 (TQSFYSSRSGQSTRPGKKTPE) is disordered. Residues 110–326 (ELNSKYTFSR…GALLRAVTHI (217 aa)) form a domain III, AAA+ region region. ATP-binding residues include Gly154, Gly156, Lys157, and Thr158. The domain IV, binds dsDNA stretch occupies residues 327–449 (AISGLPMTVE…DRINHHHQNL (123 aa)).

The protein belongs to the DnaA family. As to quaternary structure, oligomerizes as a right-handed, spiral filament on DNA at oriC.

Its subcellular location is the cytoplasm. Plays an essential role in the initiation and regulation of chromosomal replication. ATP-DnaA binds to the origin of replication (oriC) to initiate formation of the DNA replication initiation complex once per cell cycle. Binds the DnaA box (a 9 base pair repeat at the origin) and separates the double-stranded (ds)DNA. Forms a right-handed helical filament on oriC DNA; dsDNA binds to the exterior of the filament while single-stranded (ss)DNA is stabiized in the filament's interior. The ATP-DnaA-oriC complex binds and stabilizes one strand of the AT-rich DNA unwinding element (DUE), permitting loading of DNA polymerase. After initiation quickly degrades to an ADP-DnaA complex that is not apt for DNA replication. Binds acidic phospholipids. This Picosynechococcus sp. (strain ATCC 27264 / PCC 7002 / PR-6) (Agmenellum quadruplicatum) protein is Chromosomal replication initiator protein DnaA.